A 126-amino-acid chain; its full sequence is Histone H2B 7 (126 aa).

Residues 1–12 (MPEPAKSAPAPK) are compositionally biased toward low complexity. The disordered stretch occupies residues 1–35 (MPEPAKSAPAPKKGSKKAVTKTQKKGDKKRKRARK). N6-acetyllysine is present on residues K6 and K13. Over residues 13–34 (KGSKKAVTKTQKKGDKKRKRAR) the composition is skewed to basic residues. S15 carries the post-translational modification Phosphoserine. An N6-acetyllysine mark is found at K16 and K21. A glycan (O-linked (GlcNAc) serine) is linked at S113. K121 participates in a covalent cross-link: Glycyl lysine isopeptide (Lys-Gly) (interchain with G-Cter in ubiquitin).

It belongs to the histone H2B family. The nucleosome is a histone octamer containing two molecules each of H2A, H2B, H3 and H4 assembled in one H3-H4 heterotetramer and two H2A-H2B heterodimers. The octamer wraps approximately 147 bp of DNA. Post-translationally, monoubiquitination of Lys-121 by the BRE1 gives a specific tag for epigenetic transcriptional activation and is also prerequisite for histone H3 'Lys-4' and 'Lys-79' methylation. In terms of processing, phosphorylated on Ser-15 during apoptosis; which facilitates apoptotic chromatin condensation. GlcNAcylation at Ser-113 promotes monoubiquitination of Lys-121. It fluctuates in response to extracellular glucose, and associates with transcribed genes.

Its subcellular location is the nucleus. The protein resides in the chromosome. Core component of nucleosome. Nucleosomes wrap and compact DNA into chromatin, limiting DNA accessibility to the cellular machineries which require DNA as a template. Histones thereby play a central role in transcription regulation, DNA repair, DNA replication and chromosomal stability. DNA accessibility is regulated via a complex set of post-translational modifications of histones, also called histone code, and nucleosome remodeling. This Gallus gallus (Chicken) protein is Histone H2B 7 (H2B-VII).